The chain runs to 249 residues: Cytoplasmic envelopment protein 1 (249 aa).

It belongs to the herpesviridae cytoplasmic envelopment protein 1 family.

The protein resides in the virion. Its subcellular location is the virion tegument. The protein localises to the host cytoplasm. It localises to the host Golgi apparatus. Its function is as follows. Plays a critical role in cytoplasmic virus egress. Participates in the final step of tegumentation and envelope acquisition within the host cytoplasm. This is Cytoplasmic envelopment protein 1 (U75) from Human herpesvirus 6A (strain Uganda-1102) (HHV-6 variant A).